The following is a 347-amino-acid chain: MVKVLIVDDSASVRLFLQGLLAADPGIEVIGTAADGDEAVEAVARLNPDVVTMDIYMPRMNGLLATRRIMETHPVPIVVVSGNLDAEEVASTFRAIEAGAVTALPRPQGPGHPNHEREARSFVQAVKLMAEVKVIKRWPRRDNPASLPSLPCQAMVPARLKAVAIGASTGGPMVLQTILAGLRRDFPLPVLIVQHMATGFIKGFVEWLNLTSALPVHIAGNGDRLIPGHAYVAPDCFHMLVTEDGTAIELQNTPPENGLRPSVSALFRSVTQAFGAQTVGVLLTGMGSDGARELKRLREAGAVTIVQDRESSVIHGMPGEALKLGAATHTLPPDRIVTALTSLAMEK.

The 119-residue stretch at 3 to 121 (KVLIVDDSAS…HPNHEREARS (119 aa)) folds into the Response regulatory domain. A 4-aspartylphosphate modification is found at aspartate 54. Residues 157-342 (PARLKAVAIG…PDRIVTALTS (186 aa)) form the CheB-type methylesterase domain. Residues serine 168, histidine 195, and aspartate 289 contribute to the active site.

This sequence belongs to the CheB family. In terms of processing, phosphorylated by CheA. Phosphorylation of the N-terminal regulatory domain activates the methylesterase activity.

The protein localises to the cytoplasm. The catalysed reaction is [protein]-L-glutamate 5-O-methyl ester + H2O = L-glutamyl-[protein] + methanol + H(+). It carries out the reaction L-glutaminyl-[protein] + H2O = L-glutamyl-[protein] + NH4(+). Involved in chemotaxis. Part of a chemotaxis signal transduction system that modulates chemotaxis in response to various stimuli. Catalyzes the demethylation of specific methylglutamate residues introduced into the chemoreceptors (methyl-accepting chemotaxis proteins or MCP) by CheR. Also mediates the irreversible deamidation of specific glutamine residues to glutamic acid. In Geobacter metallireducens (strain ATCC 53774 / DSM 7210 / GS-15), this protein is Protein-glutamate methylesterase/protein-glutamine glutaminase 4.